A 355-amino-acid chain; its full sequence is GTPase Obg (355 aa).

Residues M1–L159 enclose the Obg domain. The region spanning A160–D342 is the OBG-type G domain. Residues G166–S173, F191–Y195, D213–G216, N292–D295, and S323–L325 contribute to the GTP site. Residues S173 and T193 each coordinate Mg(2+).

It belongs to the TRAFAC class OBG-HflX-like GTPase superfamily. OBG GTPase family. As to quaternary structure, monomer. Mg(2+) is required as a cofactor.

It localises to the cytoplasm. An essential GTPase which binds GTP, GDP and possibly (p)ppGpp with moderate affinity, with high nucleotide exchange rates and a fairly low GTP hydrolysis rate. Plays a role in control of the cell cycle, stress response, ribosome biogenesis and in those bacteria that undergo differentiation, in morphogenesis control. The protein is GTPase Obg of Xanthomonas euvesicatoria pv. vesicatoria (strain 85-10) (Xanthomonas campestris pv. vesicatoria).